Reading from the N-terminus, the 275-residue chain is LIM/homeobox protein Awh (275 aa).

LIM zinc-binding domains lie at 6–67 (RSCA…NFGA) and 68–129 (KCSK…TVEG). T126 is modified (phosphothreonine). A DNA-binding region (homeobox) is located at residues 148-207 (TKRVRTTFTEEQLQVLQANFQIDSNPDGQDLERIASVTGLSKRVTQVWFQNSRARQKKHI). The disordered stretch occupies residues 253–275 (PTHESSMDELSQDSSVHCMPSEV).

As to expression, first detected in neuroblasts in stage 9 embryos. Expressed in all 10 abdominal segments and in the labial segment during early embryogenesis. Expressed in the stage 14 developing epithelium. By embryonic stage 16, expression is refined to the abdominal histoblasts and salivary gland imaginal ring cells. Expressed in both larval and imaginal cells between the salivary gland and the salivary gland imaginal ring, in late third instar larvae. Also expressed in specific areas of the larval wing, leg and eye-antennal disks.

The protein resides in the nucleus. Probable transcription factor. Required for the establishment of a subset of imaginal tissues: the abdominal histoblasts and the salivary gland imaginal rings. This chain is LIM/homeobox protein Awh, found in Drosophila melanogaster (Fruit fly).